The following is a 343-amino-acid chain: CCN family member 3 (343 aa).

The first 18 residues, 1–18 (MTPHLALCFILLIQQVAS), serve as a signal peptide directing secretion. The 72-residue stretch at 19 to 90 (QKCPSQCDQC…RMETGTCMAL (72 aa)) folds into the IGFBP N-terminal domain. 6 disulfides stabilise this stretch: Cys21–Cys46, Cys25–Cys48, Cys28–Cys49, Cys35–Cys52, Cys60–Cys74, and Cys66–Cys87. The VWFC domain occupies 93–159 (NSCVFDGVVY…GECCEKWVCD (67 aa)). One can recognise a TSP type-1 domain in the interval 190 to 235 (ACIAQTTEWSACSKTCGMGVSSRVTNRNARCEMQKQIRLCMVRSCE). Disulfide bonds link Cys249–Cys286, Cys266–Cys300, Cys277–Cys316, Cys280–Cys318, and Cys285–Cys322. Positions 249–323 (CVRVRKTTKP…STCVCHYNCP (75 aa)) constitute a CTCK domain. An N-linked (GlcNAc...) asparagine glycan is attached at Asn265.

Belongs to the CCN family.

The protein localises to the secreted. Its subcellular location is the cytoplasm. It is found in the cell junction. It localises to the gap junction. Immediate-early protein playing a role in various cellular processes including proliferation, adhesion, migration, differentiation and survival. Acts by binding to integrins or membrane receptors such as NOTCH1. The polypeptide is CCN family member 3 (ccn3) (Xenopus laevis (African clawed frog)).